A 774-amino-acid chain; its full sequence is 5-methyltetrahydropteroyltriglutamate--homocysteine methyltransferase (774 aa).

5-methyltetrahydropteroyltri-L-glutamate is bound by residues 15–18 and Lys-116; that span reads RELK. Residues 445-447 and Glu-498 each bind L-homocysteine; that span reads IGS. Residues 445-447 and Glu-498 contribute to the L-methionine site; that span reads IGS. 5-methyltetrahydropteroyltri-L-glutamate-binding positions include 529 to 530 and Trp-575; that span reads RC. Asp-613 contacts L-homocysteine. Asp-613 is a binding site for L-methionine. Glu-619 serves as a coordination point for 5-methyltetrahydropteroyltri-L-glutamate. 3 residues coordinate Zn(2+): His-655, Cys-657, and Glu-679. His-708 acts as the Proton donor in catalysis. Cys-740 lines the Zn(2+) pocket.

Belongs to the vitamin-B12 independent methionine synthase family. Requires Zn(2+) as cofactor.

The catalysed reaction is 5-methyltetrahydropteroyltri-L-glutamate + L-homocysteine = tetrahydropteroyltri-L-glutamate + L-methionine. The protein operates within amino-acid biosynthesis; L-methionine biosynthesis via de novo pathway; L-methionine from L-homocysteine (MetE route): step 1/1. Its function is as follows. Catalyzes the transfer of a methyl group from 5-methyltetrahydrofolate to homocysteine resulting in methionine formation. This chain is 5-methyltetrahydropteroyltriglutamate--homocysteine methyltransferase, found in Flavobacterium johnsoniae (strain ATCC 17061 / DSM 2064 / JCM 8514 / BCRC 14874 / CCUG 350202 / NBRC 14942 / NCIMB 11054 / UW101) (Cytophaga johnsonae).